Here is a 286-residue protein sequence, read N- to C-terminus: Oxidase hkm6 (286 aa).

The Cu cation site is built by histidine 16, histidine 25, and histidine 215.

Belongs to the tyrosinase family. Cu(2+) is required as a cofactor.

Its pathway is secondary metabolite biosynthesis. Oxidase; part of the gene cluster that mediates the biosynthesis of hancockiamides, an unusual new family of N-cinnamoylated piperazines. The NRPS hkm10 and the NmrA-like reductase hkm9 are proposed to convert two molecules of L-Phe to the intermediary piperazine called xenocockiamide A. Xenocockiamide A is then converted to hancockiamide D via a series of hydroxylations and O-methylations. The tyrosinase hkm6 may catalyze an aromatic hydroxylation, then the 2-oxoglutarate-dependent Fe(II) dioxygenase hkm4 and the FAD-dependent phenol hydroxylase hkm7 may catalyze consecutive hydroxylations to install 2 more hydroxy groups, and the methyltransferase hkm8 probably catalyzes two methylations using 2 molecules of S-adenosyl-L-methionine (SAM). The NRPS hkm11 activates and transfers trans-cinnamate supplied by the PAL hkm12 to hancockiamide D and produces hancockiamide A. NRPS Hkm11 has the flexibility to tolerate the bulky hancockiamide G as a substrate and the absence of the acetyl-transferase hkm3 opens up the opportunity for hkm11 to introduce a second N-cinnamoyl moiety. The cytochrome P450 monooxygenase hkm5 catalyzes the methylenedioxy bridge formation, converting hancockiamide A into hancockiamide G. Hkm5 can also convert hancockiamide B into hancockiamide C, and hancockiamide D into hancockiamide H. The N-acetyltransferase hkm3 finally transfers an acetyl group to 1-N of piperazine, converting hancockiamide A into hancockiamide B and hancockiamide G into hancockiamide C. The polypeptide is Oxidase hkm6 (Aspergillus hancockii).